The primary structure comprises 150 residues: Peptide deformylase (150 aa).

Positions 88 and 130 each coordinate Fe cation. Glu-131 is an active-site residue. His-134 contacts Fe cation.

The protein belongs to the polypeptide deformylase family. The cofactor is Fe(2+).

It catalyses the reaction N-terminal N-formyl-L-methionyl-[peptide] + H2O = N-terminal L-methionyl-[peptide] + formate. Removes the formyl group from the N-terminal Met of newly synthesized proteins. Requires at least a dipeptide for an efficient rate of reaction. N-terminal L-methionine is a prerequisite for activity but the enzyme has broad specificity at other positions. The chain is Peptide deformylase from Desulfitobacterium hafniense (strain Y51).